Here is a 351-residue protein sequence, read N- to C-terminus: S-adenosylmethionine:tRNA ribosyltransferase-isomerase (351 aa).

It belongs to the QueA family. Monomer.

It is found in the cytoplasm. The enzyme catalyses 7-aminomethyl-7-carbaguanosine(34) in tRNA + S-adenosyl-L-methionine = epoxyqueuosine(34) in tRNA + adenine + L-methionine + 2 H(+). Its pathway is tRNA modification; tRNA-queuosine biosynthesis. In terms of biological role, transfers and isomerizes the ribose moiety from AdoMet to the 7-aminomethyl group of 7-deazaguanine (preQ1-tRNA) to give epoxyqueuosine (oQ-tRNA). This chain is S-adenosylmethionine:tRNA ribosyltransferase-isomerase, found in Hyphomonas neptunium (strain ATCC 15444).